Consider the following 1401-residue polypeptide: DNA-directed RNA polymerase subunit beta' (1401 aa).

Residues C70, C72, C85, and C88 each contribute to the Zn(2+) site. Residues D460, D462, and D464 each contribute to the Mg(2+) site. Zn(2+)-binding residues include C808, C882, C889, and C892.

The protein belongs to the RNA polymerase beta' chain family. As to quaternary structure, the RNAP catalytic core consists of 2 alpha, 1 beta, 1 beta' and 1 omega subunit. When a sigma factor is associated with the core the holoenzyme is formed, which can initiate transcription. Mg(2+) is required as a cofactor. It depends on Zn(2+) as a cofactor.

The catalysed reaction is RNA(n) + a ribonucleoside 5'-triphosphate = RNA(n+1) + diphosphate. Functionally, DNA-dependent RNA polymerase catalyzes the transcription of DNA into RNA using the four ribonucleoside triphosphates as substrates. This is DNA-directed RNA polymerase subunit beta' from Legionella pneumophila (strain Lens).